Consider the following 522-residue polypeptide: Golgin subfamily A member 6-like protein 10 (522 aa).

A compositionally biased stretch (pro residues) spans 1 to 11 (MWPQPRLPPHP). The tract at residues 1-77 (MWPQPRLPPH…DSATGIYGEG (77 aa)) is disordered. Residues 51–62 (NGSSPDTATSGG) show a composition bias toward polar residues. Residues 157–328 (SKVEQLQDET…RLCEQEKLPG (172 aa)) are a coiled coil. A compositionally biased stretch (basic and acidic residues) spans 439–452 (KELEKSGGAEEPRG). The disordered stretch occupies residues 439–503 (KELEKSGGAE…TGEAAGGAEE (65 aa)). 2 stretches are compositionally biased toward low complexity: residues 456 to 471 (AAAARPVPGAPVPQGA) and 489 to 503 (GEAVGTGEAAGGAEE).

This sequence belongs to the GOLGA6 family.

This Homo sapiens (Human) protein is Golgin subfamily A member 6-like protein 10.